The primary structure comprises 83 residues: Urotensin-2 (83 aa).

Residues 49–71 (EVLLEKQSLLNPFSRVFGIRKQF) constitute a propeptide that is removed on maturation. A disulfide bridge links C77 with C82.

It belongs to the urotensin-2 family.

It localises to the secreted. In terms of biological role, urotensin is found in the teleost caudal neurosecretory system. It has a suggested role in osmoregulation and as a corticotropin-releasing factor. The non-hormonal portion of this precursor may be a urotensin binding protein, urophysin. This Platichthys flesus (European flounder) protein is Urotensin-2.